The sequence spans 423 residues: ATP-citrate synthase alpha chain protein 2 (423 aa).

The citrate site is built by Asn343, Thr345, and Arg376.

It belongs to the succinate/malate CoA ligase beta subunit family. Heterooctamer of 4 alpha and 4 beta chains.

Its subcellular location is the cytoplasm. The protein localises to the cytosol. It carries out the reaction oxaloacetate + acetyl-CoA + ADP + phosphate = citrate + ATP + CoA. In terms of biological role, ATP citrate-lyase is the primary enzyme responsible for the synthesis of cytosolic acetyl-CoA, used for the elongation of fatty acids and biosynthesis of isoprenoids, flavonoids and malonated derivatives. May supply substrate to the cytosolic acetyl-CoA carboxylase, which generates the malonyl-CoA used for the synthesis of a multitude of compounds, including very long chain fatty acids and flavonoids. Required for normal growth and development and elongation of C18 fatty acids to C20 to C24 fatty acids in seeds. In contrast to all known animal ACL enzymes having a homomeric structure, plant ACLs are composed of alpha and beta chains. The protein is ATP-citrate synthase alpha chain protein 2 (ACLA-2) of Arabidopsis thaliana (Mouse-ear cress).